Consider the following 228-residue polypeptide: Lipoprotein-releasing system ATP-binding protein LolD (228 aa).

Positions 6–228 (IKCLNVVKGY…EAGVLNKQGQ (223 aa)) constitute an ABC transporter domain. 42–49 (GASGSGKS) provides a ligand contact to ATP.

Belongs to the ABC transporter superfamily. Lipoprotein translocase (TC 3.A.1.125) family. In terms of assembly, the complex is composed of two ATP-binding proteins (LolD) and two transmembrane proteins (LolC and LolE).

The protein localises to the cell inner membrane. Functionally, part of the ABC transporter complex LolCDE involved in the translocation of mature outer membrane-directed lipoproteins, from the inner membrane to the periplasmic chaperone, LolA. Responsible for the formation of the LolA-lipoprotein complex in an ATP-dependent manner. This Saccharophagus degradans (strain 2-40 / ATCC 43961 / DSM 17024) protein is Lipoprotein-releasing system ATP-binding protein LolD.